The following is a 517-amino-acid chain: T-box transcription factor TBX5 (517 aa).

The interval 1-46 (MADADEGFGLARTPLEPDSKDRSCDSKPESALGAPSKSPSSPQAAF) is disordered. Basic and acidic residues predominate over residues 15–28 (LEPDSKDRSCDSKP). Residues 34–45 (APSKSPSSPQAA) are compositionally biased toward low complexity. The T-box DNA-binding region spans 58-238 (LHERELWLKF…NNPFAKGFRG (181 aa)). 2 disordered regions span residues 270–313 (HSPF…YPLA) and 331–369 (SSTE…SYRT). Positions 271-300 (SPFSSETRALSTSSNLGSQYQCENGVSGPS) are enriched in polar residues. Lysine 338 carries the N6-acetyllysine modification. A compositionally biased stretch (polar residues) spans 357-369 (YPQQQGLSTSYRT).

In terms of assembly, monomer. Homodimer (via the T-box); binds DNA as homodimer. Interacts (via the T-box) with NKX2-5 (via the homeobox); this complex binds DNA. Interacts with GATA4. Interacts with KAT2A and KAT2B. In terms of processing, acetylation at Lys-338 by KAT2A and KAT2B promotes nuclear retention.

It is found in the nucleus. Its subcellular location is the cytoplasm. DNA-binding protein that regulates the transcription of several genes and is involved in heart development and limb pattern formation. Binds to the core DNA motif of NPPA promoter. The polypeptide is T-box transcription factor TBX5 (Tbx5) (Rattus norvegicus (Rat)).